The chain runs to 394 residues: Elongation factor Tu 1 (394 aa).

Residues 9-204 form the tr-type G domain; the sequence is KPHCNIGTIG…AIDDYIPQPT (196 aa). Positions 18 to 25 are G1; that stretch reads GHVDHGKT. 18–25 contributes to the GTP binding site; that stretch reads GHVDHGKT. Thr-25 provides a ligand contact to Mg(2+). A G2 region spans residues 61–65; the sequence is GITIQ. Residues 82 to 85 are G3; it reads DCPG. Residues 82 to 86 and 137 to 140 contribute to the GTP site; these read DCPGH and NKID. The interval 137-140 is G4; the sequence is NKID. Residues 174-176 form a G5 region; sequence SAL.

Belongs to the TRAFAC class translation factor GTPase superfamily. Classic translation factor GTPase family. EF-Tu/EF-1A subfamily. In terms of assembly, monomer.

Its subcellular location is the cytoplasm. It carries out the reaction GTP + H2O = GDP + phosphate + H(+). Its function is as follows. GTP hydrolase that promotes the GTP-dependent binding of aminoacyl-tRNA to the A-site of ribosomes during protein biosynthesis. The chain is Elongation factor Tu 1 from Orientia tsutsugamushi (strain Boryong) (Rickettsia tsutsugamushi).